We begin with the raw amino-acid sequence, 153 residues long: Cytochrome c-type biogenesis protein CcmE (153 aa).

The Cytoplasmic segment spans residues 1-6 (MNARRR). A helical; Signal-anchor for type II membrane protein transmembrane segment spans residues 7-27 (LWSLLMLILAVGTAATLTIMA). Residues 28 to 153 (LRRNLTYLYM…LDTPIAQTTP (126 aa)) are Periplasmic-facing. Heme contacts are provided by H121 and Y125. The segment covering 130 to 141 (LTNKMQPTPTQH) has biased composition (polar residues). The disordered stretch occupies residues 130-153 (LTNKMQPTPTQHTHLDTPIAQTTP).

The protein belongs to the CcmE/CycJ family.

The protein localises to the cell inner membrane. Its function is as follows. Heme chaperone required for the biogenesis of c-type cytochromes. Transiently binds heme delivered by CcmC and transfers the heme to apo-cytochromes in a process facilitated by CcmF and CcmH. This is Cytochrome c-type biogenesis protein CcmE from Xylella fastidiosa (strain 9a5c).